Consider the following 1168-residue polypeptide: Probable serine/threonine protein kinase IRE (1168 aa).

2 disordered regions span residues 1–165 and 377–444; these read MSTT…GVES and EKQN…KIQP. Positions 16 to 25 are enriched in low complexity; sequence PTTISTPTST. Basic and acidic residues-rich tracts occupy residues 39–54 and 107–130; these read RHSD…KTDE and QDDK…DARA. Polar residues-rich tracts occupy residues 146-163 and 401-414; these read QWSQ…NPGV and TARS…NFRM. The C2H2-type; atypical zinc-finger motif lies at 488–507; it reads CRICEVEIPVVHVEEHSRIC. Disordered stretches follow at residues 546 to 566, 602 to 622, and 717 to 744; these read PRAV…DLDE, GTKD…PRNS, and SSNA…LNPR. In terms of domain architecture, Protein kinase spans 754–1043; the sequence is FEIIKPISRG…AGEVKQHHFF (290 aa). Residues 760–768 and Lys783 each bind ATP; that span reads ISRGAFGRV. Asp877 functions as the Proton acceptor in the catalytic mechanism. The 101-residue stretch at 1044 to 1144 folds into the AGC-kinase C-terminal domain; it reads KDINWDTLAR…KNLSQLASIN (101 aa).

The protein belongs to the protein kinase superfamily. AGC Ser/Thr protein kinase family. Highly expressed in roots, elongating root hair cells and pollen grains.

The catalysed reaction is L-seryl-[protein] + ATP = O-phospho-L-seryl-[protein] + ADP + H(+). It carries out the reaction L-threonyl-[protein] + ATP = O-phospho-L-threonyl-[protein] + ADP + H(+). In terms of biological role, modulates root tip growth. May play a common role in the tip growth of plant cells. The chain is Probable serine/threonine protein kinase IRE from Arabidopsis thaliana (Mouse-ear cress).